Here is an 805-residue protein sequence, read N- to C-terminus: Phosphoinositide 3-kinase adapter protein 1 (805 aa).

Residues 8–145 (RGCDILIVYS…AVKKAISEDS (138 aa)) enclose the TIR domain. A necessary and sufficient to mediate inhibition of NF-kappa-B downstream of activated TLRs; may mediate interaction with MYD88 and TIRAP region spans residues 10-144 (CDILIVYSPD…AAVKKAISED (135 aa)). A disordered region spans residues 145-165 (SGCDSVTDTEPEDEKVVSYSK). Residues 181–317 (VQPDRIRCGA…NIPASGLHLF (137 aa)) enclose the DBB domain. Phosphotyrosine is present on Tyr263. 3 positions are modified to phosphotyrosine; by SYK: Tyr419, Tyr444, and Tyr459. Tyr513 carries the phosphotyrosine; by ABL1 modification. The segment at 527–547 (ASRPPVPVPRPETTAPGAHQL) is disordered. A phosphotyrosine; by ABL1 mark is found at Tyr553 and Tyr570. The tract at residues 571–590 (VSSESIRKGPPVRPWRDRPQ) is disordered. Position 594 is a phosphotyrosine; by ABL1 (Tyr594). At Ser642 the chain carries Phosphoserine. The stretch at 645 to 667 (FQQENLKRLRDSITRRQREKQKS) forms a coiled coil. Positions 654 to 672 (RDSITRRQREKQKSGKQTD) are enriched in basic and acidic residues. Residues 654 to 679 (RDSITRRQREKQKSGKQTDLEITVPI) are disordered. Tyr694 bears the Phosphotyrosine; by ABL1 mark. The tract at residues 697–805 (GPRKSVIPPR…PPPPVPPRGR (109 aa)) is disordered. The segment covering 707–716 (TELRRGDWKT) has biased composition (basic and acidic residues). A compositionally biased stretch (low complexity) spans 717-740 (DSTSSTASSTSNRSSTRSLLSVSS). Residue Ser718 is modified to Phosphoserine. A compositionally biased stretch (pro residues) spans 795 to 805 (HPPPPVPPRGR).

In terms of assembly, homooligomer. Interacts (phosphorylated on tyrosine residues within YXXM motifs) with PIK3R1 (via SH2 domain); required for BCR- and TLR-mediated activation of phosphoinositide 3-kinase. Interacts (via polyproline C-terminal region) with ABI1 (via SH3 domain); the interaction promotes phosphorylation of PIK3AP1 by ABL1. May interact with MYD88 and TIRAP. In terms of processing, constitutively phosphorylated. Phosphorylated on tyrosine residues in C-terminal region by ABL1. Phosphorylated on tyrosine residues within the YXXM motifs by BTK and SYK. Isoform 1 and isoform 2 are phosphorylated on tyrosine residues, most likely within the YXXM motifs, via CD19 activation. Toll-like receptor activation induces appearance of a phosphorylated form associated with membranes. As to expression, expressed in natural killer (NK) cells.

Its subcellular location is the cytoplasm. It is found in the cell membrane. Functionally, signaling adapter that contributes to B-cell development by linking B-cell receptor (BCR) signaling to the phosphoinositide 3-kinase (PI3K)-Akt signaling pathway. Has a complementary role to the BCR coreceptor CD19, coupling BCR and PI3K activation by providing a docking site for the PI3K subunit PIK3R1. Alternatively, links Toll-like receptor (TLR) signaling to PI3K activation, a process preventing excessive inflammatory cytokine production. Also involved in the activation of PI3K in natural killer cells. May be involved in the survival of mature B-cells via activation of REL. The protein is Phosphoinositide 3-kinase adapter protein 1 (PIK3AP1) of Homo sapiens (Human).